The following is a 147-amino-acid chain: D-aminoacyl-tRNA deacylase (147 aa).

The short motif at 137-138 is the Gly-cisPro motif, important for rejection of L-amino acids element; sequence GP.

This sequence belongs to the DTD family. Homodimer.

Its subcellular location is the cytoplasm. It catalyses the reaction glycyl-tRNA(Ala) + H2O = tRNA(Ala) + glycine + H(+). The enzyme catalyses a D-aminoacyl-tRNA + H2O = a tRNA + a D-alpha-amino acid + H(+). In terms of biological role, an aminoacyl-tRNA editing enzyme that deacylates mischarged D-aminoacyl-tRNAs. Also deacylates mischarged glycyl-tRNA(Ala), protecting cells against glycine mischarging by AlaRS. Acts via tRNA-based rather than protein-based catalysis; rejects L-amino acids rather than detecting D-amino acids in the active site. By recycling D-aminoacyl-tRNA to D-amino acids and free tRNA molecules, this enzyme counteracts the toxicity associated with the formation of D-aminoacyl-tRNA entities in vivo and helps enforce protein L-homochirality. This Bacillus licheniformis (strain ATCC 14580 / DSM 13 / JCM 2505 / CCUG 7422 / NBRC 12200 / NCIMB 9375 / NCTC 10341 / NRRL NRS-1264 / Gibson 46) protein is D-aminoacyl-tRNA deacylase.